Reading from the N-terminus, the 265-residue chain is NAD kinase 1 (265 aa).

The active-site Proton acceptor is the Asp-45. Residues Asp-45 to Gly-46, His-50, Asn-122 to Glu-123, Arg-148, Asp-150, and Ala-185 each bind NAD(+).

This sequence belongs to the NAD kinase family. A divalent metal cation is required as a cofactor.

Its subcellular location is the cytoplasm. It carries out the reaction NAD(+) + ATP = ADP + NADP(+) + H(+). In terms of biological role, involved in the regulation of the intracellular balance of NAD and NADP, and is a key enzyme in the biosynthesis of NADP. Catalyzes specifically the phosphorylation on 2'-hydroxyl of the adenosine moiety of NAD to yield NADP. In Halalkalibacterium halodurans (strain ATCC BAA-125 / DSM 18197 / FERM 7344 / JCM 9153 / C-125) (Bacillus halodurans), this protein is NAD kinase 1.